The following is a 475-amino-acid chain: Probable phenylalanine--tRNA ligase alpha subunit (475 aa).

The tract at residues 2 to 151 (TAVAQKIIEN…KRKLVSRRKK (150 aa)) is contains the major tRNA-Phe binding sites. Residues threonine 309, 351–353 (QVE), and tyrosine 391 contribute to the L-phenylalanine site. Residue glutamate 393 participates in Mg(2+) binding. Phenylalanine 417 lines the L-phenylalanine pocket.

It belongs to the class-II aminoacyl-tRNA synthetase family. Phe-tRNA synthetase alpha subunit type 2 subfamily. In terms of assembly, tetramer of two alpha and two beta subunits. Mg(2+) is required as a cofactor.

Its subcellular location is the cytoplasm. The enzyme catalyses tRNA(Phe) + L-phenylalanine + ATP = L-phenylalanyl-tRNA(Phe) + AMP + diphosphate + H(+). The chain is Probable phenylalanine--tRNA ligase alpha subunit from Encephalitozoon cuniculi (strain GB-M1) (Microsporidian parasite).